A 434-amino-acid chain; its full sequence is Glutamyl-tRNA reductase (434 aa).

Residues 49–52 (TCNR), serine 114, 119–121 (EPQ), and glutamine 125 contribute to the substrate site. Cysteine 50 functions as the Nucleophile in the catalytic mechanism. An NADP(+)-binding site is contributed by 199–204 (GAGETI).

Belongs to the glutamyl-tRNA reductase family. In terms of assembly, homodimer.

It carries out the reaction (S)-4-amino-5-oxopentanoate + tRNA(Glu) + NADP(+) = L-glutamyl-tRNA(Glu) + NADPH + H(+). Its pathway is porphyrin-containing compound metabolism; protoporphyrin-IX biosynthesis; 5-aminolevulinate from L-glutamyl-tRNA(Glu): step 1/2. In terms of biological role, catalyzes the NADPH-dependent reduction of glutamyl-tRNA(Glu) to glutamate 1-semialdehyde (GSA). This chain is Glutamyl-tRNA reductase, found in Pasteurella multocida (strain Pm70).